Here is a 409-residue protein sequence, read N- to C-terminus: Arginine biosynthesis bifunctional protein ArgJ (409 aa).

Substrate contacts are provided by threonine 156, lysine 182, threonine 193, glutamate 280, asparagine 404, and serine 409. The active-site Nucleophile is the threonine 193.

It belongs to the ArgJ family. In terms of assembly, heterotetramer of two alpha and two beta chains.

The protein localises to the cytoplasm. It catalyses the reaction N(2)-acetyl-L-ornithine + L-glutamate = N-acetyl-L-glutamate + L-ornithine. The catalysed reaction is L-glutamate + acetyl-CoA = N-acetyl-L-glutamate + CoA + H(+). It participates in amino-acid biosynthesis; L-arginine biosynthesis; L-ornithine and N-acetyl-L-glutamate from L-glutamate and N(2)-acetyl-L-ornithine (cyclic): step 1/1. Its pathway is amino-acid biosynthesis; L-arginine biosynthesis; N(2)-acetyl-L-ornithine from L-glutamate: step 1/4. In terms of biological role, catalyzes two activities which are involved in the cyclic version of arginine biosynthesis: the synthesis of N-acetylglutamate from glutamate and acetyl-CoA as the acetyl donor, and of ornithine by transacetylation between N(2)-acetylornithine and glutamate. The protein is Arginine biosynthesis bifunctional protein ArgJ of Nitrosomonas europaea (strain ATCC 19718 / CIP 103999 / KCTC 2705 / NBRC 14298).